The sequence spans 263 residues: Uridylate kinase (263 aa).

Position 29-32 (29-32 (KVSG)) interacts with ATP. G71 contributes to the UMP binding site. G72 and R76 together coordinate ATP. UMP-binding positions include D91 and 152-159 (TGNPFFTT). ATP-binding residues include T179, Q180, Y185, and D188.

Belongs to the UMP kinase family. Homohexamer.

The protein resides in the cytoplasm. It catalyses the reaction UMP + ATP = UDP + ADP. Its pathway is pyrimidine metabolism; CTP biosynthesis via de novo pathway; UDP from UMP (UMPK route): step 1/1. Inhibited by UTP. In terms of biological role, catalyzes the reversible phosphorylation of UMP to UDP. The sequence is that of Uridylate kinase from Maricaulis maris (strain MCS10) (Caulobacter maris).